The sequence spans 102 residues: uncharacterized protein (102 aa).

The chain crosses the membrane as a helical span at residues 36-55 (IISLLAIFIKMCLWLWKQFL).

The protein resides in the membrane. This is an uncharacterized protein from Homo sapiens (Human).